The following is a 426-amino-acid chain: Dihydroorotase (426 aa).

The Zn(2+) site is built by H55 and H57. Residues H57–R59 and N89 each bind substrate. Zn(2+) contacts are provided by D147, H174, H233, and D306. Residue D306 is part of the active site. Substrate is bound by residues H310 and F324–G325.

It belongs to the metallo-dependent hydrolases superfamily. DHOase family. Class I DHOase subfamily. The cofactor is Zn(2+).

It catalyses the reaction (S)-dihydroorotate + H2O = N-carbamoyl-L-aspartate + H(+). Its pathway is pyrimidine metabolism; UMP biosynthesis via de novo pathway; (S)-dihydroorotate from bicarbonate: step 3/3. In terms of biological role, catalyzes the reversible cyclization of carbamoyl aspartate to dihydroorotate. The polypeptide is Dihydroorotase (Thermus aquaticus).